A 599-amino-acid polypeptide reads, in one-letter code: Adenine deaminase (599 aa).

It belongs to the metallo-dependent hydrolases superfamily. Adenine deaminase family. Requires Mn(2+) as cofactor.

The enzyme catalyses adenine + H2O + H(+) = hypoxanthine + NH4(+). This Clostridium botulinum (strain 657 / Type Ba4) protein is Adenine deaminase.